The sequence spans 337 residues: Nicotinate-nucleotide--dimethylbenzimidazole phosphoribosyltransferase (337 aa).

Glu-305 (proton acceptor) is an active-site residue.

This sequence belongs to the CobT family.

It carries out the reaction 5,6-dimethylbenzimidazole + nicotinate beta-D-ribonucleotide = alpha-ribazole 5'-phosphate + nicotinate + H(+). Its pathway is nucleoside biosynthesis; alpha-ribazole biosynthesis; alpha-ribazole from 5,6-dimethylbenzimidazole: step 1/2. Its function is as follows. Catalyzes the synthesis of alpha-ribazole-5'-phosphate from nicotinate mononucleotide (NAMN) and 5,6-dimethylbenzimidazole (DMB). The chain is Nicotinate-nucleotide--dimethylbenzimidazole phosphoribosyltransferase from Roseobacter denitrificans (strain ATCC 33942 / OCh 114) (Erythrobacter sp. (strain OCh 114)).